Reading from the N-terminus, the 302-residue chain is Tritrans,polycis-undecaprenyl-diphosphate synthase (geranylgeranyl-diphosphate specific) (302 aa).

Aspartate 33 is an active-site residue. A Mg(2+)-binding site is contributed by aspartate 33. Substrate is bound by residues 34–37 (GNRR) and 78–80 (STE). The active-site Proton acceptor is the asparagine 81. Substrate is bound by residues phenylalanine 82, arginine 84, arginine 203, and 209–211 (RTS).

This sequence belongs to the UPP synthase family. In terms of assembly, homodimer. Requires Mg(2+) as cofactor.

The enzyme catalyses geranylgeranyl diphosphate + 7 isopentenyl diphosphate = tri-trans,hepta-cis-undecaprenyl diphosphate + 7 diphosphate. Functionally, catalyzes the sequential condensation of isopentenyl diphosphate (IPP) with geranylgeranyl diphosphate (GGPP) to yield (2Z,6Z,10Z,14Z,18Z,22Z,26Z,30E,34E,38E)-undecaprenyl diphosphate (tritrans,heptacis-UPP). It is probably the precursor of glycosyl carrier lipids. The sequence is that of Tritrans,polycis-undecaprenyl-diphosphate synthase (geranylgeranyl-diphosphate specific) from Halobacterium salinarum (strain ATCC 700922 / JCM 11081 / NRC-1) (Halobacterium halobium).